The sequence spans 161 residues: Allophycocyanin beta chain (161 aa).

Residue N71 is modified to N4-methylasparagine. C81 contacts (2R,3E)-phycocyanobilin.

It belongs to the phycobiliprotein family. As to quaternary structure, heterodimer of an alpha and a beta chain. Post-translationally, contains one covalently linked phycocyanobilin chromophore.

Its subcellular location is the cellular thylakoid membrane. Functionally, light-harvesting photosynthetic bile pigment-protein from the phycobiliprotein complex. Allophycocyanin has a maximum absorption at approximately 650 nanometers. This chain is Allophycocyanin beta chain (apcB), found in Synechocystis sp. (strain PCC 6714) (Aphanocapsa sp. (strain PCC 6714)).